The chain runs to 417 residues: D-amino acid dehydrogenase (417 aa).

Residue 3–17 (AVVLGSGVVGLMSAW) participates in FAD binding.

This sequence belongs to the DadA oxidoreductase family. FAD serves as cofactor.

The catalysed reaction is a D-alpha-amino acid + A + H2O = a 2-oxocarboxylate + AH2 + NH4(+). In terms of biological role, oxidative deamination of D-amino acids. This is D-amino acid dehydrogenase from Vibrio vulnificus (strain CMCP6).